The chain runs to 666 residues: Amyloid beta A4 precursor protein-binding family B member 1-interacting protein (666 aa).

Residue serine 55 is modified to Phosphoserine. Residues 122–155 form a disordered region; that stretch reads SQYEDDLPPPPADPVLDLPLPPPPPEPLSQEEEE. Pro residues predominate over residues 129 to 148; the sequence is PPPPADPVLDLPLPPPPPEP. The Ras-associating domain occupies 176-263; it reads KKLVVKVHMN…KILFLEKEEK (88 aa). The region spanning 310-419 is the PH domain; that stretch reads VPELEGALYL…WVMGIRIAKY (110 aa). The disordered stretch occupies residues 448–666; that stretch reads AAAPAQPSTG…ALQKKRGNVS (219 aa). A compositionally biased stretch (polar residues) spans 453 to 478; that stretch reads QPSTGPKTGTTQPNGQIPQATHSVSA. Residues 483-504 are compositionally biased toward basic and acidic residues; that stretch reads AQRHAETSKDKKPALGNHHDPA. Serine 526 is modified (phosphoserine). Threonine 528 carries the post-translational modification Phosphothreonine. Serine 531 bears the Phosphoserine mark. 2 stretches are compositionally biased toward pro residues: residues 547–589 and 598–631; these read PAPP…PPPS and LPPP…PVPP.

Belongs to the MRL family. As to quaternary structure, interacts, through the N-terminal Pro-rich region, with the WW domain of APBB1. Interacts with RAP1A, PFN1, TLN1, VASP, VCL and ENAH. As to expression, widely expressed with high expression in thymus, spleen, lymph node, bone marrow and peripheral leukocytes.

It is found in the cell membrane. Its subcellular location is the cell projection. The protein localises to the lamellipodium. The protein resides in the cell junction. It localises to the focal adhesion. It is found in the cytoplasm. Its subcellular location is the cytoskeleton. Functionally, appears to function in the signal transduction from Ras activation to actin cytoskeletal remodeling. Suppresses insulin-induced promoter activities through AP1 and SRE. Mediates Rap1-induced adhesion. This Homo sapiens (Human) protein is Amyloid beta A4 precursor protein-binding family B member 1-interacting protein (APBB1IP).